Here is a 42-residue protein sequence, read N- to C-terminus: uncharacterized protein (42 aa).

This is an uncharacterized protein from Pasteurella multocida (strain Pm70).